Consider the following 520-residue polypeptide: MLKNIINKKNLFINNQQNIFQIIKRNKMTDSTVDNKGYIVGIYENEEFTPLGQQLNEKTNGHLLKSIKLSDTKGKVGDNLVLYNVTPEVSRVAIVGLGKKENNNSTTYEKNENTRKAIGSGVKALKSKNATHLTIDSNIGDAKQTAEGAFLSNFKFDFKTGTSGKTANSTNESIQVQLSPSPSSEECFKEGKILAESQNFARVLMETPANLLTPTNFVQHVSSQMKELIDSGKVEMIVREEQWVKDQKMGMFWGVAKGSDEPLKFLELHYRGASADGKDSIVYVGKGITFDSGGISIKPSANMGLMKGDMGGAATAVSAMFGVASLGLKVNLITITPLCENMPSGKATKPGDILTAANGKTVEVDNTDAEGRLILGDALHYACSFKPTHIIDIATLTGAIDVALGQHYAGCFTTTDSLWDQLNECGNISGERLWRMPLIPEYRKQMETSKVADLINSAGRSGGACCAAGFLKEFITADQSWSHLDIAGVMSSSEDGPYIRKGMTGKPTRTLIEFAKKNQQ.

2 residues coordinate Zn(2+): lysine 286 and aspartate 291. The active site involves lysine 298. Positions 309, 368, and 370 each coordinate Zn(2+). Arginine 372 is a catalytic residue.

The protein belongs to the peptidase M17 family. In terms of assembly, homohexamer. Zn(2+) serves as cofactor.

Its subcellular location is the cytoplasm. It carries out the reaction Release of an N-terminal amino acid, Xaa-|-Yaa-, in which Xaa is preferably Leu, but may be other amino acids including Pro although not Arg or Lys, and Yaa may be Pro. Amino acid amides and methyl esters are also readily hydrolyzed, but rates on arylamides are exceedingly low.. The enzyme catalyses Release of N-terminal proline from a peptide.. Its function is as follows. Presumably involved in the processing and regular turnover of intracellular proteins. Catalyzes the removal of unsubstituted N-terminal amino acids from various peptides. This Dictyostelium discoideum (Social amoeba) protein is Cytosol aminopeptidase (lap).